We begin with the raw amino-acid sequence, 82 residues long: ATP synthase subunit c (82 aa).

A run of 2 helical transmembrane segments spans residues 7–27 (AASV…PGIG) and 57–77 (LAFM…LLFA).

It belongs to the ATPase C chain family. F-type ATPases have 2 components, F(1) - the catalytic core - and F(0) - the membrane proton channel. F(1) has five subunits: alpha(3), beta(3), gamma(1), delta(1), epsilon(1). F(0) has four main subunits: a(1), b(1), b'(1) and c(10-14). The alpha and beta chains form an alternating ring which encloses part of the gamma chain. F(1) is attached to F(0) by a central stalk formed by the gamma and epsilon chains, while a peripheral stalk is formed by the delta, b and b' chains.

It is found in the cellular thylakoid membrane. F(1)F(0) ATP synthase produces ATP from ADP in the presence of a proton or sodium gradient. F-type ATPases consist of two structural domains, F(1) containing the extramembraneous catalytic core and F(0) containing the membrane proton channel, linked together by a central stalk and a peripheral stalk. During catalysis, ATP synthesis in the catalytic domain of F(1) is coupled via a rotary mechanism of the central stalk subunits to proton translocation. In terms of biological role, key component of the F(0) channel; it plays a direct role in translocation across the membrane. A homomeric c-ring of between 10-14 subunits forms the central stalk rotor element with the F(1) delta and epsilon subunits. The polypeptide is ATP synthase subunit c (Synechococcus sp. (strain RCC307)).